We begin with the raw amino-acid sequence, 346 residues long: Elongation factor Ts (346 aa).

The involved in Mg(2+) ion dislocation from EF-Tu stretch occupies residues 80 to 83 (TDFV).

The protein belongs to the EF-Ts family.

The protein resides in the cytoplasm. Associates with the EF-Tu.GDP complex and induces the exchange of GDP to GTP. It remains bound to the aminoacyl-tRNA.EF-Tu.GTP complex up to the GTP hydrolysis stage on the ribosome. The polypeptide is Elongation factor Ts (Streptococcus thermophilus (strain CNRZ 1066)).